The following is a 581-amino-acid chain: Intermediate filament protein ifa-3 (581 aa).

A disordered region spans residues 1 to 33 (MADPDSYRSSITSRPAFNRTVTSSTQNYGTPAS). Residues 1-74 (MADPDSYRSS…RDDREREKKE (74 aa)) form a head region. Residues 7–33 (YRSSITSRPAFNRTVTSSTQNYGTPAS) are compositionally biased toward polar residues. The 354-residue stretch at 71 to 424 (EKKEITELND…RMLEGNSEEN (354 aa)) folds into the IF rod domain. The tract at residues 75–106 (ITELNDRLASYIGKVRFLAAQNRKLEADLNVL) is coil 1A. The segment at 107-120 (QSRFGKSTGSVKIM) is linker 1. The coil 1B stretch occupies residues 121 to 258 (YEMEITTATN…RGFETELKDL (138 aa)). The interval 259–276 (QAQAARDTTSENREYFKN) is linker 12. Residues 277 to 424 (ELMNSIRDIR…RMLEGNSEEN (148 aa)) form a coil 2 region. A tail region spans residues 425-578 (GLRQLVEKVV…THMQRQSQQT (154 aa)). One can recognise an LTD domain in the interval 457–574 (SRTSYQRSAK…EERATHMQRQ (118 aa)).

It belongs to the intermediate filament family. Forms some heteromeric filaments with ifb-1. Expressed in the embryonic and larval hypodermis. Also expressed in the ventral nerve cord of larvae.

It is found in the cytoplasm. Functionally, cytoplasmic intermediate filaments provide mechanical strength to cells. Essential protein, involved in attachment structures in epidermal cells that connect muscles to the external cuticle. Required for epidermal morphogenesis in embryos. Probable component of embryonic epidermal attachment structures. This is Intermediate filament protein ifa-3 (ifa-3) from Caenorhabditis elegans.